The following is a 295-amino-acid chain: Non-selective voltage-gated ion channel VDAC2 (295 aa).

The ATP site is built by lysine 24 and lysine 32. Lysine 32 is subject to N6-acetyllysine; alternate. Lysine 32 is modified (N6-succinyllysine; alternate). Lysine 32 participates in a covalent cross-link: Glycyl lysine isopeptide (Lys-Gly) (interchain with G-Cter in ubiquitin); alternate. The next 2 membrane-spanning stretches (beta stranded) occupy residues 38–45 (LVKLDVKT) and 51–60 (VEFSTSGSSN). Lysine 65 is covalently cross-linked (Glycyl lysine isopeptide (Lys-Gly) (interchain with G-Cter in ubiquitin)). The beta stranded transmembrane segment at 66-76 (VSGTLETKYKW) threads the bilayer. Residue tyrosine 79 is modified to Phosphotyrosine. Beta stranded transmembrane passes span 81–88 (LTFTEKWN), 92–100 (TLGTEIAIE), and 107–116 (LKLTFDTTFS). Threonine 119 carries the phosphothreonine modification. Residue lysine 121 is modified to N6-acetyllysine; alternate. Lysine 121 is covalently cross-linked (Glycyl lysine isopeptide (Lys-Gly) (interchain with G-Cter in ubiquitin); alternate). A Glycyl lysine isopeptide (Lys-Gly) (interchain with G-Cter in ubiquitin) cross-link involves residue lysine 122. Transmembrane regions (beta stranded) follow at residues 122–131 (KSGKIKSAYK), 135–144 (INLGCDVDFD), 148–157 (PAIHGSAVFG), and 161–170 (WLAGYQMTFD). Lysine 173 is covalently cross-linked (Glycyl lysine isopeptide (Lys-Gly) (interchain with G-Cter in ubiquitin)). 6 beta stranded membrane-spanning segments follow: residues 177 to 187 (TRSNFAVGYRT), 190 to 197 (FQLHTNVN), 201 to 210 (EFGGSIYQKV), 214 to 222 (FDTSVNLAW), 229 to 238 (TRFGIAAKYQ), and 243 to 250 (ASISAKVN). Serine 252 bears the Phosphoserine mark. Residues 254–256 (LIG) and 272–276 (SALVD) contribute to the NAD(+) site. The next 2 beta stranded transmembrane spans lie at 254-263 (LIGVGYTQTL) and 267-275 (VKLTLSALV). Lysine 278 is subject to N6-acetyllysine; alternate. A Glycyl lysine isopeptide (Lys-Gly) (interchain with G-Cter in ubiquitin); alternate cross-link involves residue lysine 278. The chain crosses the membrane as a beta stranded span at residues 285-295 (HKLGLALELEA).

The protein belongs to the eukaryotic mitochondrial porin family. As to quaternary structure, monomer, homodimer and higher order oligomers; formation of higher order structures is necessary for scramblase activity. Interacts with ARMC12 in a TBC1D21-dependent manner. Interacts with KLC3. Interacts with SPATA33. Interacts with PPP3CC in a SPATA33-dependent manner. Ubiquitinated by PRKN during mitophagy, leading to its degradation and enhancement of mitophagy. Deubiquitinated by USP30. As to expression, highest levels of expression detected in testis, less but still abundant expression in heart, kidney, brain, and skeletal muscle. Expressed in the sperm midpiece (at protein level).

Its subcellular location is the mitochondrion outer membrane. The protein localises to the membrane. The catalysed reaction is chloride(in) = chloride(out). The enzyme catalyses K(+)(in) = K(+)(out). It catalyses the reaction a 1,2-diacyl-sn-glycero-3-phospho-L-serine(in) = a 1,2-diacyl-sn-glycero-3-phospho-L-serine(out). It carries out the reaction a 1,2-diacyl-sn-glycero-3-phosphocholine(in) = a 1,2-diacyl-sn-glycero-3-phosphocholine(out). The catalysed reaction is a 1,2-diacyl-sn-glycero-3-phospho-(1D-myo-inositol)(in) = a 1,2-diacyl-sn-glycero-3-phospho-(1D-myo-inositol)(out). Its function is as follows. Non-selective voltage-gated ion channel that mediates the transport of anions and cations through the mitochondrion outer membrane and plasma membrane. The channel adopts an open conformation at zero mV and a closed conformation at both positive and negative potentials. There are two populations of channels; the main that functions in a lower open-state conductance with lower ion selectivity, that switch, in a voltage-dependent manner, from the open to a low-conducting 'closed' state and the other that has a normal ion selectivity in the typical high conductance, 'open' state. Binds various lipids, including the sphingolipid ceramide, the phospholipid phosphatidylcholine, and the sterols cholesterol and oxysterol. Binding of ceramide promotes the mitochondrial outer membrane permeabilization (MOMP) apoptotic pathway. Catalyzes the scrambling of phospholipids across the outer mitochondrial membrane; the mechanism is unrelated to channel activity and is capable of translocating both anionic and zwitterionic phospholipids. The protein is Non-selective voltage-gated ion channel VDAC2 of Mus musculus (Mouse).